A 297-amino-acid polypeptide reads, in one-letter code: Bifunctional protein FolD 1 (297 aa).

NADP(+) contacts are provided by residues 174–176, Ser-199, and Ile-240; that span reads GRS.

This sequence belongs to the tetrahydrofolate dehydrogenase/cyclohydrolase family. In terms of assembly, homodimer.

It carries out the reaction (6R)-5,10-methylene-5,6,7,8-tetrahydrofolate + NADP(+) = (6R)-5,10-methenyltetrahydrofolate + NADPH. It catalyses the reaction (6R)-5,10-methenyltetrahydrofolate + H2O = (6R)-10-formyltetrahydrofolate + H(+). It functions in the pathway one-carbon metabolism; tetrahydrofolate interconversion. Functionally, catalyzes the oxidation of 5,10-methylenetetrahydrofolate to 5,10-methenyltetrahydrofolate and then the hydrolysis of 5,10-methenyltetrahydrofolate to 10-formyltetrahydrofolate. In Acinetobacter baylyi (strain ATCC 33305 / BD413 / ADP1), this protein is Bifunctional protein FolD 1.